Consider the following 153-residue polypeptide: 6,7-dimethyl-8-ribityllumazine synthase (153 aa).

Residues Phe21, 55–57 (AFE), and 79–81 (TVI) contribute to the 5-amino-6-(D-ribitylamino)uracil site. 84 to 85 (AT) is a binding site for (2S)-2-hydroxy-3-oxobutyl phosphate. Catalysis depends on His87, which acts as the Proton donor. Phe112 is a 5-amino-6-(D-ribitylamino)uracil binding site. A (2S)-2-hydroxy-3-oxobutyl phosphate-binding site is contributed by Arg126.

It belongs to the DMRL synthase family. In terms of assembly, forms an icosahedral capsid composed of 60 subunits, arranged as a dodecamer of pentamers.

The catalysed reaction is (2S)-2-hydroxy-3-oxobutyl phosphate + 5-amino-6-(D-ribitylamino)uracil = 6,7-dimethyl-8-(1-D-ribityl)lumazine + phosphate + 2 H2O + H(+). Its pathway is cofactor biosynthesis; riboflavin biosynthesis; riboflavin from 2-hydroxy-3-oxobutyl phosphate and 5-amino-6-(D-ribitylamino)uracil: step 1/2. Its function is as follows. Catalyzes the formation of 6,7-dimethyl-8-ribityllumazine by condensation of 5-amino-6-(D-ribitylamino)uracil with 3,4-dihydroxy-2-butanone 4-phosphate. This is the penultimate step in the biosynthesis of riboflavin. The sequence is that of 6,7-dimethyl-8-ribityllumazine synthase from Bacillus cereus (strain B4264).